We begin with the raw amino-acid sequence, 36 residues long: U-metritoxin-Msn1a (36 aa).

The 33-residue stretch at 4 to 36 (CKDKLPACGEYRGSFCKLEKVKSNCEKTCGVKC) folds into the ShKT domain. Intrachain disulfides connect cysteine 4/cysteine 36, cysteine 11/cysteine 28, and cysteine 19/cysteine 32.

It belongs to the sea anemone type 1 potassium channel toxin family. Type 1b subfamily.

It is found in the secreted. The protein localises to the nematocyst. Functionally, has hemolytic activity. Inhibits voltage-gated potassium channels (Kv1/KCNA). The chain is U-metritoxin-Msn1a from Metridium senile (Brown sea anemone).